Here is a 299-residue protein sequence, read N- to C-terminus: uncharacterized protein (299 aa).

The HTH lysR-type domain occupies 1–59; sequence MDKIHAMQLFIKVAELESFSRAADFFALPKGSVSRQIQALEHQLGTQLLQRTTRRVKLT. The segment at residues 19–38 is a DNA-binding region (H-T-H motif); the sequence is FSRAADFFALPKGSVSRQIQ.

Belongs to the LysR transcriptional regulatory family.

This is an uncharacterized protein from Escherichia coli (strain K12).